The chain runs to 622 residues: ATP-dependent lipid A-core flippase (622 aa).

5 helical membrane-spanning segments follow: residues 32–52 (IVAA…LAAF), 91–111 (VWGT…LVVI), 192–212 (IVLL…FPLL), 286–306 (SPFS…IALW), and 312–332 (YTTI…YAPI). Residues 33–344 (VAALIAIFGV…LANISIPMQT (312 aa)) enclose the ABC transmembrane type-1 domain. The 234-residue stretch at 378-611 (FRNVDVEYRS…NGYYTMLRNI (234 aa)) folds into the ABC transporter domain. 410 to 417 (GRSGSGKS) lines the ATP pocket.

The protein belongs to the ABC transporter superfamily. Lipid exporter (TC 3.A.1.106) family. As to quaternary structure, homodimer.

It localises to the cell inner membrane. The enzyme catalyses ATP + H2O + lipid A-core oligosaccharideSide 1 = ADP + phosphate + lipid A-core oligosaccharideSide 2.. In terms of biological role, involved in lipopolysaccharide (LPS) biosynthesis. Translocates lipid A-core from the inner to the outer leaflet of the inner membrane. Transmembrane domains (TMD) form a pore in the inner membrane and the ATP-binding domain (NBD) is responsible for energy generation. The chain is ATP-dependent lipid A-core flippase from Neisseria gonorrhoeae (strain ATCC 700825 / FA 1090).